Consider the following 465-residue polypeptide: uncharacterized protein (465 aa).

Positions 13 to 71 (GPRPGLRLELQAIDLDRDGHGLARWQGWVVVVPGLLPGERAKVQLQQRQKSRWLSRISE) constitute a TRAM domain. 4 residues coordinate [4Fe-4S] cluster: Cys84, Cys90, Cys93, and Cys171. 4 residues coordinate S-adenosyl-L-methionine: Gln294, Tyr324, Glu345, and Asp391. Cys418 functions as the Nucleophile in the catalytic mechanism.

Belongs to the class I-like SAM-binding methyltransferase superfamily. RNA M5U methyltransferase family.

This is an uncharacterized protein from Parasynechococcus marenigrum (strain WH8102).